The following is a 173-amino-acid chain: 16S rRNA aminocarboxypropyltransferase (173 aa).

S-adenosyl-L-methionine-binding residues include T25, L72, L96, and S115.

It belongs to the TDD superfamily. TSR3 family.

The protein resides in the cytoplasm. The catalysed reaction is an N(1)-methylpseudouridine in rRNA + S-adenosyl-L-methionine = N(1)-methyl-N(3)-[(3S)-3-amino-3-carboxypropyl]pseudouridine in rRNA + S-methyl-5'-thioadenosine + H(+). Aminocarboxypropyltransferase that catalyzes the aminocarboxypropyl transfer on pseudouridine corresponding to position 914 in M.jannaschii 16S rRNA. It constitutes the last step in biosynthesis of the hypermodified N1-methyl-N3-(3-amino-3-carboxypropyl) pseudouridine (m1acp3-Psi). The protein is 16S rRNA aminocarboxypropyltransferase of Methanosarcina mazei (strain ATCC BAA-159 / DSM 3647 / Goe1 / Go1 / JCM 11833 / OCM 88) (Methanosarcina frisia).